Consider the following 443-residue polypeptide: Glutamine synthetase (443 aa).

The 87-residue stretch at Val11–Glu97 folds into the GS beta-grasp domain. The GS catalytic domain maps to Pro103–Val443. Mg(2+) contacts are provided by Glu126 and Glu128. ATP is bound at residue Glu176. Residues Glu181 and Glu188 each coordinate Mg(2+). Gly233 serves as a coordination point for L-glutamate. His237 is a binding site for Mg(2+). Residues His239–Ser241 and Ser241 contribute to the ATP site. Residues Arg287, Glu293, and Arg305 each coordinate L-glutamate. Arg305 and Arg310 together coordinate ATP. Glu322 serves as a coordination point for Mg(2+). Residue Arg324 coordinates L-glutamate.

The protein belongs to the glutamine synthetase family. As to quaternary structure, oligomer of 12 subunits arranged in the form of two hexagons. The cofactor is Mg(2+). Requires Mn(2+) as cofactor.

Its subcellular location is the cytoplasm. It catalyses the reaction L-glutamate + NH4(+) + ATP = L-glutamine + ADP + phosphate + H(+). The catalysed reaction is hydroxylamine + L-glutamate + ATP = L-glutamine hydroxamate + ADP + phosphate. With respect to regulation, the activity of this enzyme is not controlled by adenylation. In terms of biological role, carries out the ATP-dependent synthesis of glutamine from ammonium nitrogen and glutamate. Exhibits both L-gamma-glutamylhydroxamate synthetase and gamma-glutamyltransferase activities when using hydroxylamine as substrate; in fact, the enzyme possesses low biosynthetic activity, suggesting that the reaction is biased towards the degradation of glutamine under ammonia-rich conditions. Might play some role in ammonia assimilation under ammonia-starvation conditions. Can also use GTP instead of ATP in the synthetase reaction, but not CTP or UTP. The chain is Glutamine synthetase from Thermococcus kodakarensis (strain ATCC BAA-918 / JCM 12380 / KOD1) (Pyrococcus kodakaraensis (strain KOD1)).